The chain runs to 605 residues: Golgi-associated RAB2 interactor protein 3 (605 aa).

2 disordered regions span residues 234-265 and 407-529; these read GEGI…AART and YMSE…ALQK. A compositionally biased stretch (low complexity) spans 239 to 265; the sequence is HASHGTASAASPSTSTPGAAEGGAART. Positions 434 to 457 are enriched in basic residues; that stretch reads KKDRHPSRKSSHHRKAGESHRRRA. A Bipartite nuclear localization signal motif is present at residues 441–458; sequence RKSSHHRKAGESHRRRAG. The segment covering 463 to 473 has biased composition (polar residues); the sequence is KASSHRSASGH. Residues 475–484 are compositionally biased toward basic and acidic residues; the sequence is NTRDDKKEKG. A compositionally biased stretch (basic residues) spans 489–500; that stretch reads RGKRHGSSRKSS. Polar residues predominate over residues 513-526; that stretch reads QELGKNQSASSTGA. Residue Ser592 is modified to Phosphoserine.

Belongs to the GARIN family. As to quaternary structure, interacts (via N-terminus) with RAB2B (in GTP-bound form). Interacts with FRG1. Expressed in adult spermatocytes and spermatids (at protein level).

The protein localises to the golgi apparatus. It is found in the nucleus. It localises to the cajal body. Its function is as follows. May be involved in RNA biogenesis. The chain is Golgi-associated RAB2 interactor protein 3 from Homo sapiens (Human).